The sequence spans 328 residues: Olfactory receptor 13A1 (328 aa).

Over Met-1 to Val-43 the chain is Extracellular. A glycan (N-linked (GlcNAc...) asparagine) is linked at Asn-23. The helical transmembrane segment at Phe-44–Thr-64 threads the bilayer. At Leu-65 to Gly-72 the chain is on the cytoplasmic side. The helical transmembrane segment at Leu-73–Ser-93 threads the bilayer. Over Ser-94–Ala-117 the chain is Extracellular. A disulfide bond links Cys-115 and Cys-207. Residues Gln-118–Tyr-138 traverse the membrane as a helical segment. The Cytoplasmic segment spans residues Asp-139–Val-157. Residues Phe-158–Thr-178 form a helical membrane-spanning segment. The Extracellular portion of the chain corresponds to Gly-179–Val-215. The helical transmembrane segment at Met-216–Ser-235 threads the bilayer. The Cytoplasmic segment spans residues Tyr-236–Ala-255. A helical transmembrane segment spans residues Phe-256 to Ala-276. Residues Tyr-277–Ser-289 lie on the Extracellular side of the membrane. A helical transmembrane segment spans residues Lys-290 to Leu-310. The Cytoplasmic portion of the chain corresponds to Arg-311–Asn-328.

Belongs to the G-protein coupled receptor 1 family.

It is found in the cell membrane. Its function is as follows. Odorant receptor. In Homo sapiens (Human), this protein is Olfactory receptor 13A1 (OR13A1).